We begin with the raw amino-acid sequence, 583 residues long: Penicillin-binding protein activator LpoA (583 aa).

Positions 1-24 are cleaved as a signal peptide; sequence MATILKQKLKTFFVPTAITLLLSA. Residue Cys-25 is the site of N-palmitoyl cysteine attachment. Residue Cys-25 is the site of S-diacylglycerol cysteine attachment.

It belongs to the LpoA family. As to quaternary structure, interacts with PBP1a.

Its subcellular location is the cell outer membrane. Its function is as follows. Regulator of peptidoglycan synthesis that is essential for the function of penicillin-binding protein 1A (PBP1a). In Haemophilus ducreyi (strain 35000HP / ATCC 700724), this protein is Penicillin-binding protein activator LpoA.